Reading from the N-terminus, the 327-residue chain is Glycolipid sulfotransferase BCG_1434 (327 aa).

40-45 (KSGLTW) is a 3'-phosphoadenylyl sulfate binding site. H97 (proton acceptor) is an active-site residue. Residue 116-124 (RDPRDAAVS) participates in 3'-phosphoadenylyl sulfate binding.

This sequence belongs to the sulfotransferase 1 family.

Involved in the synthesis of cell wall sulfolipids. The polypeptide is Glycolipid sulfotransferase BCG_1434 (Mycobacterium bovis (strain BCG / Pasteur 1173P2)).